Consider the following 353-residue polypeptide: Outer membrane protein P2 (353 aa).

The first 20 residues, 1 to 20, serve as a signal peptide directing secretion; the sequence is MKKTLAALIVGAFAASAANA.

Belongs to the Gram-negative porin family. In terms of assembly, homotrimer.

It localises to the cell outer membrane. Its function is as follows. Forms pores that allow passive diffusion of small molecules across the outer membrane. This chain is Outer membrane protein P2 (ompP2), found in Haemophilus influenzae.